A 469-amino-acid chain; its full sequence is Adenosylhomocysteinase (469 aa).

Residues Thr-63, Asp-139, and Glu-164 each contribute to the substrate site. NAD(+) is bound at residue 165–167 (TTT). 2 residues coordinate substrate: Lys-194 and Asp-198. NAD(+) contacts are provided by residues Asn-199, 228-233 (GYGDVG), Glu-251, Asn-300, 321-323 (IGH), and Asn-375.

This sequence belongs to the adenosylhomocysteinase family. Requires NAD(+) as cofactor.

The protein localises to the cytoplasm. It carries out the reaction S-adenosyl-L-homocysteine + H2O = L-homocysteine + adenosine. The protein operates within amino-acid biosynthesis; L-homocysteine biosynthesis; L-homocysteine from S-adenosyl-L-homocysteine: step 1/1. May play a key role in the regulation of the intracellular concentration of adenosylhomocysteine. This is Adenosylhomocysteinase from Pseudomonas fluorescens (strain SBW25).